The chain runs to 129 residues: Small ribosomal subunit protein uS11c (129 aa).

The protein belongs to the universal ribosomal protein uS11 family. In terms of assembly, part of the 30S ribosomal subunit.

The protein localises to the plastid. It localises to the chloroplast. This is Small ribosomal subunit protein uS11c from Cyanidium caldarium (Red alga).